The primary structure comprises 135 residues: Phosphomevalonate dehydratase small subunit (135 aa).

Serine 67 acts as the Proton acceptor in catalysis.

This sequence belongs to the AcnX type II small subunit family. As to quaternary structure, heterodimer composed of a large subunit (PMDh-L) and a small subunit (PMDh-S).

It catalyses the reaction (R)-5-phosphomevalonate = (2E)-3-methyl-5-phosphooxypent-2-enoate + H2O. The protein operates within isoprenoid biosynthesis; isopentenyl diphosphate biosynthesis via mevalonate pathway. Functionally, component of a hydro-lyase that catalyzes the dehydration of mevalonate 5-phosphate (MVA5P) to form trans-anhydromevalonate 5-phosphate (tAHMP). Involved in the archaeal mevalonate (MVA) pathway, which provides fundamental precursors for isoprenoid biosynthesis, such as isopentenyl diphosphate (IPP) and dimethylallyl diphosphate (DMAPP). The protein is Phosphomevalonate dehydratase small subunit of Methanopyrus kandleri (strain AV19 / DSM 6324 / JCM 9639 / NBRC 100938).